Here is a 643-residue protein sequence, read N- to C-terminus: Nucleolar GTP-binding protein 1 (643 aa).

Positions 168-340 (RTLLICGYPN…VRNKACEKLL (173 aa)) constitute an OBG-type G domain. Residues 174 to 181 (GYPNVGKS), 220 to 224 (DTPGI), and 288 to 291 (NKTD) each bind GTP. The segment at 568–643 (GDQEDSAPAG…KRGVGKTDFR (76 aa)) is disordered. Basic and acidic residues predominate over residues 594-622 (MRSKAERMAKLERRERNRMARAGESDRHA).

This sequence belongs to the TRAFAC class OBG-HflX-like GTPase superfamily. OBG GTPase family. NOG subfamily.

It is found in the nucleus. Its subcellular location is the nucleolus. Involved in the biogenesis of the 60S ribosomal subunit. This is Nucleolar GTP-binding protein 1 (NOG1) from Kluyveromyces lactis (strain ATCC 8585 / CBS 2359 / DSM 70799 / NBRC 1267 / NRRL Y-1140 / WM37) (Yeast).